The following is a 210-amino-acid chain: Cytochrome c oxidase subunit 2 (210 aa).

Residues 1 to 20 (MAFILSFWMIFLLDSVIVLL) lie on the Mitochondrial intermembrane side of the membrane. Residues 21 to 42 (SFVCFVCVWICALLFSTVLLVS) form a helical membrane-spanning segment. Over 43–60 (KLNNIYCTWDFTASKFID) the chain is Mitochondrial matrix. The helical transmembrane segment at 61-86 (VYWFTIGGMFSLGLLLRLCLLLYFGH) threads the bilayer. The Mitochondrial intermembrane portion of the chain corresponds to 87–210 (LNFVSFDLCK…GFMPIVICFI (124 aa)). Cu cation-binding residues include His-157, Cys-192, Glu-194, Cys-196, His-200, and Met-203. A Mg(2+)-binding site is contributed by Glu-194.

Belongs to the cytochrome c oxidase subunit 2 family. As to quaternary structure, component of the cytochrome c oxidase (complex IV, CIV), a multisubunit enzyme composed of a catalytic core of 3 subunits and several supernumerary subunits. The complex exists as a monomer or a dimer and forms supercomplexes (SCs) in the inner mitochondrial membrane with ubiquinol-cytochrome c oxidoreductase (cytochrome b-c1 complex, complex III, CIII). It depends on Cu cation as a cofactor.

It localises to the mitochondrion inner membrane. It carries out the reaction 4 Fe(II)-[cytochrome c] + O2 + 8 H(+)(in) = 4 Fe(III)-[cytochrome c] + 2 H2O + 4 H(+)(out). Component of the cytochrome c oxidase, the last enzyme in the mitochondrial electron transport chain which drives oxidative phosphorylation. The respiratory chain contains 3 multisubunit complexes succinate dehydrogenase (complex II, CII), ubiquinol-cytochrome c oxidoreductase (cytochrome b-c1 complex, complex III, CIII) and cytochrome c oxidase (complex IV, CIV), that cooperate to transfer electrons derived from NADH and succinate to molecular oxygen, creating an electrochemical gradient over the inner membrane that drives transmembrane transport and the ATP synthase. Cytochrome c oxidase is the component of the respiratory chain that catalyzes the reduction of oxygen to water. Electrons originating from reduced cytochrome c in the intermembrane space (IMS) are transferred via the dinuclear copper A center (CU(A)) of subunit 2 and heme A of subunit 1 to the active site in subunit 1, a binuclear center (BNC) formed by heme A3 and copper B (CU(B)). The BNC reduces molecular oxygen to 2 water molecules using 4 electrons from cytochrome c in the IMS and 4 protons from the mitochondrial matrix. In Leishmania tarentolae (Sauroleishmania tarentolae), this protein is Cytochrome c oxidase subunit 2.